The chain runs to 570 residues: Urease subunit alpha (570 aa).

Histidine 137, histidine 139, and lysine 220 together coordinate Ni(2+). Position 220 is an N6-carboxylysine (lysine 220). Residue histidine 222 participates in substrate binding. 2 residues coordinate Ni(2+): histidine 249 and histidine 275. Residue histidine 323 is the Proton donor of the active site. Position 363 (aspartate 363) interacts with Ni(2+).

The protein belongs to the metallo-dependent hydrolases superfamily. Urease alpha subunit family. As to quaternary structure, heterotrimer of UreA (gamma), UreB (beta) and UreC (alpha) subunits. Three heterotrimers associate to form the active enzyme. Ni cation is required as a cofactor. Post-translationally, carboxylation allows a single lysine to coordinate two nickel ions.

The protein localises to the cytoplasm. The enzyme catalyses urea + 2 H2O + H(+) = hydrogencarbonate + 2 NH4(+). Its pathway is nitrogen metabolism; urea degradation; CO(2) and NH(3) from urea (urease route): step 1/1. The polypeptide is Urease subunit alpha (Lachnoclostridium phytofermentans (strain ATCC 700394 / DSM 18823 / ISDg) (Clostridium phytofermentans)).